We begin with the raw amino-acid sequence, 173 residues long: MSVDRKPRTSNDAHDLSELLVSVRRVSKVVKGGRRFSFSVLVVVGDEKGRVGCGMGKHAEVAEAKIKAVNAAKKNMIRVYLRESRTLHHDVTAKFCASRVILRSAKVGTGIIAGGSVRAVFEVLGVQDVVAKIVGSSNAHTVIYAVFSAFKSMLSPKQVAGKRGKKVCDVINR.

The S5 DRBM domain maps to 16–79 (LSELLVSVRR…NAAKKNMIRV (64 aa)).

The protein belongs to the universal ribosomal protein uS5 family. Part of the 30S ribosomal subunit. Contacts proteins S4 and S8.

In terms of biological role, with S4 and S12 plays an important role in translational accuracy. Located at the back of the 30S subunit body where it stabilizes the conformation of the head with respect to the body. In Anaplasma phagocytophilum (strain HZ), this protein is Small ribosomal subunit protein uS5.